Consider the following 106-residue polypeptide: Large ribosomal subunit protein uL24 (106 aa).

The protein belongs to the universal ribosomal protein uL24 family. In terms of assembly, part of the 50S ribosomal subunit.

Functionally, one of two assembly initiator proteins, it binds directly to the 5'-end of the 23S rRNA, where it nucleates assembly of the 50S subunit. In terms of biological role, one of the proteins that surrounds the polypeptide exit tunnel on the outside of the subunit. This Laribacter hongkongensis (strain HLHK9) protein is Large ribosomal subunit protein uL24.